A 273-amino-acid chain; its full sequence is Coiled-coil domain-containing protein 122 (273 aa).

Residues 1–17 (MSDNKERKSQGFPKEDN) are compositionally biased toward basic and acidic residues. Residues 1-39 (MSDNKERKSQGFPKEDNQDTSSLADAVEKVAKQQQSQAS) are disordered. Coiled-coil stretches lie at residues 24–116 (ADAV…TAQE) and 179–269 (NRIT…RKCI).

The chain is Coiled-coil domain-containing protein 122 (CCDC122) from Homo sapiens (Human).